The primary structure comprises 101 residues: B3 domain-containing protein At1g08985 (101 aa).

Residues 7–101 (IVKTLSETDC…WQNTKFIFSM (95 aa)) constitute a DNA-binding region (TF-B3).

The protein localises to the nucleus. This is B3 domain-containing protein At1g08985 from Arabidopsis thaliana (Mouse-ear cress).